A 438-amino-acid chain; its full sequence is Transcriptional enhancer factor TEF-3 (438 aa).

A compositionally biased stretch (polar residues) spans 1–18; that stretch reads MTSEWSSPASPEGSNDSG. 2 disordered regions span residues 1-36 and 195-217; these read MTSE…GVWS and QPSL…STPA. The TEA DNA-binding region spans 28–104; that stretch reads DNDAEGVWSP…QVLARRKARE (77 aa). Over residues 205–216 the composition is skewed to low complexity; it reads SPTGLPPSSSTP.

In terms of tissue distribution, enriched in cardiac and skeletal muscle.

The protein localises to the nucleus. In terms of biological role, transcription factor which plays a key role in the Hippo signaling pathway, a pathway involved in organ size control and tumor suppression by restricting proliferation and promoting apoptosis. The core of this pathway is composed of a kinase cascade wherein MST1/MST2, in complex with its regulatory protein SAV1, phosphorylates and activates LATS1/2 in complex with its regulatory protein MOB1, which in turn phosphorylates and inactivates YAP1 oncoprotein and WWTR1/TAZ. Binds m-cat elements from muscle-specific promoters and differentially activate transcription. Functionally, isoform B has probably a transactivation capacity that is lacking in the other isoforms. Isoform D may be defective in DNA binding. In Gallus gallus (Chicken), this protein is Transcriptional enhancer factor TEF-3 (TEAD4).